Reading from the N-terminus, the 429-residue chain is Glucose-1-phosphate adenylyltransferase (429 aa).

Alpha-D-glucose 1-phosphate-binding positions include G162, 177-178 (EK), and S209.

This sequence belongs to the bacterial/plant glucose-1-phosphate adenylyltransferase family. Homotetramer.

The enzyme catalyses alpha-D-glucose 1-phosphate + ATP + H(+) = ADP-alpha-D-glucose + diphosphate. Its pathway is glycan biosynthesis; glycogen biosynthesis. In terms of biological role, involved in the biosynthesis of ADP-glucose, a building block required for the elongation reactions to produce glycogen. Catalyzes the reaction between ATP and alpha-D-glucose 1-phosphate (G1P) to produce pyrophosphate and ADP-Glc. The protein is Glucose-1-phosphate adenylyltransferase of Gloeothece citriformis (strain PCC 7424) (Cyanothece sp. (strain PCC 7424)).